Consider the following 1011-residue polypeptide: RAS protein activator like-3 (1011 aa).

Residues 1 to 38 (MDPPSPSRTSQTQPTATSPLTSYRWHTGGGGEKAAGGF) form a disordered region. Positions 7-22 (SRTSQTQPTATSPLTS) are enriched in low complexity. 2 positions are modified to phosphoserine: Ser18 and Ser51. Disordered stretches follow at residues 52 to 136 (HQEP…PVWD), 151 to 197 (GGEE…GPNQ), and 209 to 230 (KEKK…GSRE). Residues 81–95 (SRLRLSKALWGRHKN) show a composition bias toward basic residues. A compositionally biased stretch (acidic residues) spans 100 to 117 (PDPEPEQEAPELEPEPEL). A compositionally biased stretch (pro residues) spans 118–131 (EPPTPQIPEAPTPN). Phosphoserine is present on residues Ser164, Ser166, Ser167, and Ser170. Basic and acidic residues predominate over residues 179–190 (RDPDRMPGKTEP). In terms of domain architecture, PH spans 197–293 (QVHNVRGLLK…WIEDLRRQFQ (97 aa)). A phosphoserine mark is found at Ser224, Ser228, and Ser231. Thr234 carries the post-translational modification Phosphothreonine. Residues 284–404 (WIEDLRRQFQ…APAAGLERWF (121 aa)) form the C2 domain. Residues 474-682 (GRAQALVTDL…PAMQCFLDQV (209 aa)) form the Ras-GAP domain. Disordered stretches follow at residues 756-885 (QVHS…LGTH) and 987-1011 (LSPR…GDTT). A phosphoserine mark is found at Ser787 and Ser790. The span at 792 to 808 (RRSESWARPRPDEERPL) shows a compositional bias: basic and acidic residues. Composition is skewed to polar residues over residues 871–882 (QMDQPQDRNQAL) and 987–999 (LSPR…SQPQ). A coiled-coil region spans residues 888–988 (VNKLAELQCE…RDAVQSLQLS (101 aa)). A Phosphoserine modification is found at Ser988.

In terms of tissue distribution, predominantly expressed in cells of hematopoietic lineages.

The protein resides in the cytoplasm. It is found in the cell cortex. Its function is as follows. Functions as a Ras GTPase-activating protein. Plays an important role in the expansion and functions of natural killer T (NKT) cells in the liver by negatively regulating RAS activity and the down-stream ERK signaling pathway. In Homo sapiens (Human), this protein is RAS protein activator like-3 (RASAL3).